The following is a 171-amino-acid chain: 3-hydroxydecanoyl-[acyl-carrier-protein] dehydratase (171 aa).

His-70 is an active-site residue.

This sequence belongs to the thioester dehydratase family. FabA subfamily. As to quaternary structure, homodimer.

The protein localises to the cytoplasm. It catalyses the reaction a (3R)-hydroxyacyl-[ACP] = a (2E)-enoyl-[ACP] + H2O. The catalysed reaction is (3R)-hydroxydecanoyl-[ACP] = (2E)-decenoyl-[ACP] + H2O. The enzyme catalyses (2E)-decenoyl-[ACP] = (3Z)-decenoyl-[ACP]. Its pathway is lipid metabolism; fatty acid biosynthesis. Necessary for the introduction of cis unsaturation into fatty acids. Catalyzes the dehydration of (3R)-3-hydroxydecanoyl-ACP to E-(2)-decenoyl-ACP and then its isomerization to Z-(3)-decenoyl-ACP. Can catalyze the dehydratase reaction for beta-hydroxyacyl-ACPs with saturated chain lengths up to 16:0, being most active on intermediate chain length. The chain is 3-hydroxydecanoyl-[acyl-carrier-protein] dehydratase from Histophilus somni (strain 129Pt) (Haemophilus somnus).